We begin with the raw amino-acid sequence, 353 residues long: uncharacterized protein (353 aa).

Disordered regions lie at residues 1 to 24 (MSTS…QQSQ), 245 to 280 (NKSS…EKVP), and 305 to 353 (AAGK…DLNN). Over residues 9-24 (NKKNNTKQQKYQQQSQ) the composition is skewed to low complexity. A compositionally biased stretch (basic and acidic residues) spans 254–280 (KSGDKSTVKSTDKQVEKKVEESSEKVP). Over residues 321-332 (VTTSTSESTVEV) the composition is skewed to low complexity. Acidic residues predominate over residues 342 to 353 (EPDEEVFEDLNN).

This is an uncharacterized protein from Acanthamoeba polyphaga mimivirus (APMV).